The sequence spans 178 residues: uncharacterized protein (178 aa).

The protein resides in the mitochondrion. This is an uncharacterized protein from Paramecium tetraurelia.